We begin with the raw amino-acid sequence, 243 residues long: Late expression factor 1 (243 aa).

The protein belongs to the baculoviridae LEF-1 family.

Functionally, required for late and very late gene expression. This Orgyia pseudotsugata multicapsid polyhedrosis virus (OpMNPV) protein is Late expression factor 1 (LEF-1).